A 326-amino-acid polypeptide reads, in one-letter code: Tumor necrosis factor soluble receptor (326 aa).

The signal sequence occupies residues 1-16 (MFRLTLLLAYVACVYG). TNFR-Cys repeat units lie at residues 27–62 (KCRG…TVCS), 63–104 (PCKN…DRVC), 105–147 (DCSA…VLCT), and 148–186 (KCPR…TSCT). Intrachain disulfides connect C28–C39, C40–C53, C43–C61, C64–C79, C82–C96, C86–C104, C106–C120, C123–C146, C129–C149, and C164–C185. The N-linked (GlcNAc...) asparagine; by host glycan is linked to N66. Residues N181, N205, and N238 are each glycosylated (N-linked (GlcNAc...) asparagine; by host).

Functionally, binds to TNF-alpha and beta. Probably prevents TNF to reach cellular target and thereby deampening the potential antiviral effects of the cytokine. This chain is Tumor necrosis factor soluble receptor, found in Oryctolagus cuniculus (Rabbit).